The following is a 388-amino-acid chain: GTPase Obg (388 aa).

Positions 1–159 (MKFVDEAVIR…RSLKLELLLL (159 aa)) constitute an Obg domain. One can recognise an OBG-type G domain in the interval 160–333 (ADVGLLGMPN…LATKLLDFIQ (174 aa)). GTP is bound by residues 166–173 (GMPNAGKS), 191–195 (FTTLV), 213–216 (DIPG), 283–286 (NKAD), and 314–316 (SAY). Mg(2+)-binding residues include Ser-173 and Thr-193.

Belongs to the TRAFAC class OBG-HflX-like GTPase superfamily. OBG GTPase family. Monomer. Requires Mg(2+) as cofactor.

Its subcellular location is the cytoplasm. Its function is as follows. An essential GTPase which binds GTP, GDP and possibly (p)ppGpp with moderate affinity, with high nucleotide exchange rates and a fairly low GTP hydrolysis rate. Plays a role in control of the cell cycle, stress response, ribosome biogenesis and in those bacteria that undergo differentiation, in morphogenesis control. In Shewanella sp. (strain MR-4), this protein is GTPase Obg.